Reading from the N-terminus, the 302-residue chain is MGRPSSGAVGQPKVRKGLWSPEEDEKLYNHIIRHGVGCWSSVPRLAALNRCGKSCRLRWINYLRPDLKRGCFSQQEEDHIVALHQILGNRWSQIASHLPGRTDNEIKNFWNSCIKKKLRQQGIDPATHKPMASADTATAAAALPDAEEEDRKPLCPAVDGSLVPKQPAVFDPFPLCVDYGAGFAEELGAANAAALYGQLCGGKEVADDDAGFGAADYSCVLDVSENLGYGESSSNSSNWNYGGEVGSVLDGEVPHWAKAEPAFAEMERQQQHSPAEQKLSLPCQEQSLLASFDFNLELEPYF.

HTH myb-type domains lie at 11-63 (QPKV…INYL) and 64-118 (RPDL…KKKL). 2 consecutive DNA-binding regions (H-T-H motif) follow at residues 39–63 (WSSVPRLAALNRCGKSCRLRWINYL) and 91–114 (WSQIASHLPGRTDNEIKNFWNSCI). The tract at residues 137 to 158 (ATAAAALPDAEEEDRKPLCPAV) is disordered.

In terms of tissue distribution, germinating seed and apical meristem of shoot and root.

It localises to the nucleus. Possible transcription activator in response to an external signal. May be involved in the regulation of flavonoid biosynthesis. The chain is Myb-related protein Hv33 (MYB2) from Hordeum vulgare (Barley).